Reading from the N-terminus, the 820-residue chain is Probable ATP-dependent RNA helicase DDX23 (820 aa).

Basic and acidic residues predominate over residues 1–42; it reads MAGELADKKDRDASPSKEERKRSRTPDRERDRDRDRKSSPSK. Residues 1–244 form a disordered region; sequence MAGELADKKD…QKIREEKDKS (244 aa). Phosphoserine occurs at positions 14 and 16. Basic residues predominate over residues 43-65; that stretch reads DRKRHRSRDRRRGGSRSRSRSRS. Residues 66 to 105 are compositionally biased toward basic and acidic residues; it reads KSAERERRHKERERDKERDRNKKDRDRDKDGHRRDKDRKR. A phosphoserine mark is found at Ser-107 and Ser-109. Basic and acidic residues-rich tracts occupy residues 112-137, 147-226, and 233-244; these read RGKDFKSRKDRDSKKDEEDEHGDKKP, LLAK…RETN, and GRQKIREEKDKS. A Q motif motif is present at residues 391–419; sequence RSWKDSSLPPHILEVIDKCGYKEPTPIQR. The Helicase ATP-binding domain maps to 422–627; sequence IPIGLQNRDI…RSYLRRPAVV (206 aa). 435–442 contributes to the ATP binding site; sequence AETGSGKT. The DEAD box signature appears at 549 to 552; sequence DEAD. Positions 651–799 constitute a Helicase C-terminal domain; the sequence is KRKKLLAILE…SCPPELANHP (149 aa). Residues Lys-686 and Lys-811 each participate in a glycyl lysine isopeptide (Lys-Gly) (interchain with G-Cter in SUMO2) cross-link.

It belongs to the DEAD box helicase family. DDX23/PRP28 subfamily. As to quaternary structure, the phosphorylated form (by SRPK2) is a component of the U4/U6-U5 tri-snRNP complex composed of the U4, U6 and U5 snRNAs and at least PRPF3, PRPF4, PRPF6, PRPF8, PRPF31, SNRNP200, TXNL4A, WDR57, SNRNP40, DDX23, CD2BP2, PPIH, SNU13, EFTUD2, SART1 and USP39. Identified in the spliceosome C complex. Interacts with ERBB4. Interacts with ERCC6. Post-translationally, in vitro phosphorylated by CLK1 and U1 snRNP-associated protein kinase. Phosphorylated by SRPK2 and this phosphorylation is required for its association with the tri-snRNP (U4/U6-U5 tri-small nuclear ribonucleoproteins) and subsequent spliceosomal B complex formation. May be phosphorylated by SRPK2 on Ser residues in the SR domain; the phosphorylation is required for the removal of inappropriate R-loops during transcription.

Its subcellular location is the nucleus. The protein resides in the chromosome. The enzyme catalyses ATP + H2O = ADP + phosphate + H(+). Its function is as follows. Involved in pre-mRNA splicing and its phosphorylated form (by SRPK2) is required for spliceosomal B complex formation. Independently of its spliceosome formation function, required for the suppression of incorrect R-loops formed during transcription; R-loops are composed of a DNA:RNA hybrid and the associated non-template single-stranded DNA. The protein is Probable ATP-dependent RNA helicase DDX23 of Pongo abelii (Sumatran orangutan).